A 238-amino-acid chain; its full sequence is Keratin-associated protein 5-3 (238 aa).

11 repeat units span residues 35 to 38 (CCVP), 41 to 44 (CCKP), 47 to 50 (CCVP), 91 to 94 (CCVP), 150 to 153 (CCKP), 160 to 163 (CCKP), 170 to 173 (CCKP), 189 to 192 (CCKP), 199 to 202 (CCKP), 218 to 221 (CCKP), and 228 to 231 (CCVP). The segment at 35–231 (CCVPVCCCKP…CSSQSSCCVP (197 aa)) is 11 X 4 AA repeats of C-C-X-P.

This sequence belongs to the KRTAP type 5 family. Interacts with hair keratins. In terms of tissue distribution, restricted to hair root, not detected in any other tissues.

Functionally, in the hair cortex, hair keratin intermediate filaments are embedded in an interfilamentous matrix, consisting of hair keratin-associated protein (KRTAP), which are essential for the formation of a rigid and resistant hair shaft through their extensive disulfide bond cross-linking with abundant cysteine residues of hair keratins. The matrix proteins include the high-sulfur and high-glycine-tyrosine keratins. This Homo sapiens (Human) protein is Keratin-associated protein 5-3 (KRTAP5-3).